A 275-amino-acid polypeptide reads, in one-letter code: Release factor glutamine methyltransferase (275 aa).

S-adenosyl-L-methionine contacts are provided by residues 114 to 118 (GTGSG), aspartate 137, tryptophan 165, and asparagine 180. 180–183 (NPPY) contacts substrate.

This sequence belongs to the protein N5-glutamine methyltransferase family. PrmC subfamily.

The enzyme catalyses L-glutaminyl-[peptide chain release factor] + S-adenosyl-L-methionine = N(5)-methyl-L-glutaminyl-[peptide chain release factor] + S-adenosyl-L-homocysteine + H(+). Functionally, methylates the class 1 translation termination release factors RF1/PrfA and RF2/PrfB on the glutamine residue of the universally conserved GGQ motif. This Xylella fastidiosa (strain 9a5c) protein is Release factor glutamine methyltransferase.